The sequence spans 466 residues: Cysteine--tRNA ligase (466 aa).

C27 lines the Zn(2+) pocket. The 'HIGH' region motif lies at 29-39 (PTVYDDAHLGH). Zn(2+)-binding residues include C208, H238, and E242. The short motif at 270-274 (KMSKS) is the 'KMSKS' region element. An ATP-binding site is contributed by K273.

Belongs to the class-I aminoacyl-tRNA synthetase family. Monomer. The cofactor is Zn(2+).

It localises to the cytoplasm. It carries out the reaction tRNA(Cys) + L-cysteine + ATP = L-cysteinyl-tRNA(Cys) + AMP + diphosphate. The protein is Cysteine--tRNA ligase of Sulfurimonas denitrificans (strain ATCC 33889 / DSM 1251) (Thiomicrospira denitrificans (strain ATCC 33889 / DSM 1251)).